The following is a 216-amino-acid chain: Peptide methionine sulfoxide reductase MsrA (216 aa).

The active site involves Cys-54.

The protein belongs to the MsrA Met sulfoxide reductase family.

The enzyme catalyses L-methionyl-[protein] + [thioredoxin]-disulfide + H2O = L-methionyl-(S)-S-oxide-[protein] + [thioredoxin]-dithiol. It catalyses the reaction [thioredoxin]-disulfide + L-methionine + H2O = L-methionine (S)-S-oxide + [thioredoxin]-dithiol. Its function is as follows. Has an important function as a repair enzyme for proteins that have been inactivated by oxidation. Catalyzes the reversible oxidation-reduction of methionine sulfoxide in proteins to methionine. In Xanthomonas campestris pv. campestris (strain 8004), this protein is Peptide methionine sulfoxide reductase MsrA.